The chain runs to 545 residues: Ubiquitin carboxyl-terminal hydrolase 17-like protein C (545 aa).

Residues 51–348 form the USP domain; that stretch reads CGLQNTGNSC…NAYVLFYVQQ (298 aa). The Nucleophile role is filled by C60. Catalysis depends on H307, which acts as the Proton acceptor. Disordered stretches follow at residues 368-442 and 489-539; these read DPEY…QKLG and WGRD…KQGQ. The span at 374–385 shows a compositional bias: basic residues; sequence KKSRRKKHKKKS. Composition is skewed to basic and acidic residues over residues 393–404 and 489–505; these read EPCKNREKRATK and WGRD…HNAD. Polar residues predominate over residues 508 to 519; it reads LTSQDPVNTGQL. Over residues 524-537 the composition is skewed to basic residues; that stretch reads GRRRSKKGKNKNKQ.

The protein belongs to the peptidase C19 family. USP17 subfamily. As to expression, expressed in T cells.

The protein localises to the nucleus. Its subcellular location is the endoplasmic reticulum. The enzyme catalyses Thiol-dependent hydrolysis of ester, thioester, amide, peptide and isopeptide bonds formed by the C-terminal Gly of ubiquitin (a 76-residue protein attached to proteins as an intracellular targeting signal).. Its function is as follows. Deubiquitinating enzyme that removes conjugated ubiquitin from specific proteins to regulate different cellular processes. Important for preimplantation stage embryonic development. The sequence is that of Ubiquitin carboxyl-terminal hydrolase 17-like protein C from Mus musculus (Mouse).